Here is a 122-residue protein sequence, read N- to C-terminus: MARIAGVDLPRDKRVEIALTYIYGIGRSRSKEILAKAGVNPDTRVRDLTEDEVSKLREIIEKEYKVEGDLRKEVAMNIKRLIDIGCYRGIRHKLGLPVRGQRTRTNARTRKGPRKTVAKKKK.

The segment at 97-122 (PVRGQRTRTNARTRKGPRKTVAKKKK) is disordered. Over residues 101–122 (QRTRTNARTRKGPRKTVAKKKK) the composition is skewed to basic residues.

Belongs to the universal ribosomal protein uS13 family. Part of the 30S ribosomal subunit. Forms a loose heterodimer with protein S19. Forms two bridges to the 50S subunit in the 70S ribosome.

Functionally, located at the top of the head of the 30S subunit, it contacts several helices of the 16S rRNA. In the 70S ribosome it contacts the 23S rRNA (bridge B1a) and protein L5 of the 50S subunit (bridge B1b), connecting the 2 subunits; these bridges are implicated in subunit movement. Contacts the tRNAs in the A and P-sites. The protein is Small ribosomal subunit protein uS13 of Caldanaerobacter subterraneus subsp. tengcongensis (strain DSM 15242 / JCM 11007 / NBRC 100824 / MB4) (Thermoanaerobacter tengcongensis).